A 601-amino-acid polypeptide reads, in one-letter code: MMGALQQQSNGHGHGVLLLAEAGYAEVDPTGRYGRFNEILGKGSSKIVYRGFDEWRGVEVAWNQVRLRDVVRGGGELERFYGEVHLLAALRHRGIVRLHAYWVDAPRRALNFVTELFVSGTLRQYRERHRRVSAAAVRRWCAQILDGLAYLHAHSPPIIHRDLKCDNIFVNGNQGEVKIGDLGLAAFRRGGGHARCVGTPEFMAPEVYDESYDELADVYSFGMCVLEMVTLDYPYSECSNPIQIYKRVISGIKPAALYRVSDPVVRQFIERCLAPAARRPAARELLDDPFLLPLEDDGFFSGDGGDGHGGFGVGYYNLMYNYLHQPACIDDHHACSNGGLSPSNSVGDNDVDAAVQRGDDDGDNWLRDIHMLFDEDDDDAAAADANERVGGVDITIKGRRTDDGGVYLGLRIADKNGTGRGRIICFRFDTEADTAMTVAAEMVAELDITDHEVTRIAQLIDGKVAALVPGWRPGPATDDDDDDDLVGGGDDPDAPGGAAAACCKNCRPAASSSSSCGSLVDFMSSAAAAERHGCRRCAELHGRFEEITFQADDDEEEQHLQGSSSDTGGSNHEQHAMGKDKEVMNINGIAQDGTVQGSEQP.

Positions 34 to 291 constitute a Protein kinase domain; it reads GRFNEILGKG…ARELLDDPFL (258 aa). ATP-binding positions include 114–117 and lysine 164; that span reads TELF. Aspartate 181 serves as the catalytic Proton acceptor. Disordered regions lie at residues 470-498 and 551-601; these read GWRP…PGGA and ADDD…SEQP. The segment covering 477 to 493 has biased composition (acidic residues); that stretch reads TDDDDDDDLVGGGDDPD. Over residues 560 to 571 the composition is skewed to polar residues; it reads LQGSSSDTGGSN. Positions 572–583 are enriched in basic and acidic residues; it reads HEQHAMGKDKEV.

It belongs to the protein kinase superfamily. Ser/Thr protein kinase family. WNK subfamily.

The enzyme catalyses L-seryl-[protein] + ATP = O-phospho-L-seryl-[protein] + ADP + H(+). The catalysed reaction is L-threonyl-[protein] + ATP = O-phospho-L-threonyl-[protein] + ADP + H(+). This is Probable serine/threonine-protein kinase WNK3 (WNK3) from Oryza sativa subsp. japonica (Rice).